Here is a 293-residue protein sequence, read N- to C-terminus: Exosome complex component RRP4 (293 aa).

In terms of domain architecture, S1 motif spans 79–159 (EVGDIVVGRI…SDGAVSLHTR (81 aa)). S124 is modified (phosphoserine).

Belongs to the RRP4 family. In terms of assembly, component of the RNA exosome core complex (Exo-9), composed of EXOSC1, EXOSC2, EXOSC3, EXOSC4, EXOSC5, EXOSC6, EXOSC7, EXOSC8 and EXOSC9; within the complex interacts with EXOSC4 and EXOSC7. The catalytically inactive RNA exosome core complex (Exo-9) associates with the catalytic subunit EXOSC10/RRP6. Exo-9 may associate with DIS3 to form the nucleolar exosome complex, or DIS3L to form the cytoplasmic exosome complex. Exo-9 is formed by a hexameric base ring consisting of the heterodimers EXOSC4-EXOSC9, EXOSC5-EXOSC8 and EXOSC6-EXOSC7, and a cap ring consisting of EXOSC1, EXOSC2 and EXOSC3. The RNA exosome complex associates with cofactors C1D/RRP47, MPHOSPH6/MPP6 and MTREX/MTR4. Interacts with GTPBP1. Interacts with ZFP36L1 (via N-terminus).

Its subcellular location is the cytoplasm. It is found in the nucleus. The protein resides in the nucleolus. Functionally, non-catalytic component of the RNA exosome complex which has 3'-&gt;5' exoribonuclease activity and participates in a multitude of cellular RNA processing and degradation events. In the nucleus, the RNA exosome complex is involved in proper maturation of stable RNA species such as rRNA, snRNA and snoRNA, in the elimination of RNA processing by-products and non-coding 'pervasive' transcripts, such as antisense RNA species and promoter-upstream transcripts (PROMPTs), and of mRNAs with processing defects, thereby limiting or excluding their export to the cytoplasm. The RNA exosome may be involved in Ig class switch recombination (CSR) and/or Ig variable region somatic hypermutation (SHM) by targeting AICDA deamination activity to transcribed dsDNA substrates. In the cytoplasm, the RNA exosome complex is involved in general mRNA turnover and specifically degrades inherently unstable mRNAs containing AU-rich elements (AREs) within their 3' untranslated regions, and in RNA surveillance pathways, preventing translation of aberrant mRNAs. It seems to be involved in degradation of histone mRNA. The catalytic inactive RNA exosome core complex of 9 subunits (Exo-9) is proposed to play a pivotal role in the binding and presentation of RNA for ribonucleolysis, and to serve as a scaffold for the association with catalytic subunits and accessory proteins or complexes. EXOSC2 as peripheral part of the Exo-9 complex stabilizes the hexameric ring of RNase PH-domain subunits through contacts with EXOSC4 and EXOSC7. In Bos taurus (Bovine), this protein is Exosome complex component RRP4 (EXOSC2).